Here is a 103-residue protein sequence, read N- to C-terminus: Co-chaperonin GroES (103 aa).

This sequence belongs to the GroES chaperonin family. As to quaternary structure, heptamer of 7 subunits arranged in a ring. Interacts with the chaperonin GroEL.

Its subcellular location is the cytoplasm. Together with the chaperonin GroEL, plays an essential role in assisting protein folding. The GroEL-GroES system forms a nano-cage that allows encapsulation of the non-native substrate proteins and provides a physical environment optimized to promote and accelerate protein folding. GroES binds to the apical surface of the GroEL ring, thereby capping the opening of the GroEL channel. This Prochlorococcus marinus (strain SARG / CCMP1375 / SS120) protein is Co-chaperonin GroES.